A 102-amino-acid polypeptide reads, in one-letter code: Large ribosomal subunit protein mL63 (102 aa).

It belongs to the mitochondrion-specific ribosomal protein mL63 family.

Its subcellular location is the mitochondrion. This chain is Large ribosomal subunit protein mL63 (MRPL57), found in Bos taurus (Bovine).